A 290-amino-acid chain; its full sequence is Pyridoxal kinase PdxY (290 aa).

Residues serine 12 and 47–48 (TQ) contribute to the substrate site. ATP-binding positions include aspartate 114, glutamate 151, lysine 184, and 211-214 (RPLL). Residue aspartate 225 participates in substrate binding.

The protein belongs to the pyridoxine kinase family. PdxY subfamily. As to quaternary structure, homodimer. Mg(2+) is required as a cofactor.

The enzyme catalyses pyridoxal + ATP = pyridoxal 5'-phosphate + ADP + H(+). The protein operates within cofactor metabolism; pyridoxal 5'-phosphate salvage; pyridoxal 5'-phosphate from pyridoxal: step 1/1. Pyridoxal kinase involved in the salvage pathway of pyridoxal 5'-phosphate (PLP). Catalyzes the phosphorylation of pyridoxal to PLP. This Pseudomonas entomophila (strain L48) protein is Pyridoxal kinase PdxY.